Consider the following 336-residue polypeptide: DNA-directed RNA polymerase subunit alpha (336 aa).

The interval 1 to 226 (MLIAQRPTLS…ELFGLARELN (226 aa)) is alpha N-terminal domain (alpha-NTD). An alpha C-terminal domain (alpha-CTD) region spans residues 243–336 (LAADMALPIE…SDDAFGDDEL (94 aa)).

The protein belongs to the RNA polymerase alpha chain family. As to quaternary structure, homodimer. The RNAP catalytic core consists of 2 alpha, 1 beta, 1 beta' and 1 omega subunit. When a sigma factor is associated with the core the holoenzyme is formed, which can initiate transcription.

It catalyses the reaction RNA(n) + a ribonucleoside 5'-triphosphate = RNA(n+1) + diphosphate. Its function is as follows. DNA-dependent RNA polymerase catalyzes the transcription of DNA into RNA using the four ribonucleoside triphosphates as substrates. This Renibacterium salmoninarum (strain ATCC 33209 / DSM 20767 / JCM 11484 / NBRC 15589 / NCIMB 2235) protein is DNA-directed RNA polymerase subunit alpha.